We begin with the raw amino-acid sequence, 478 residues long: NADH-quinone oxidoreductase subunit N (478 aa).

Transmembrane regions (helical) follow at residues 7–27 (SFIP…LLIA), 46–66 (ILLV…VLTF), 74–94 (AFGD…FLFS), 109–129 (FTLG…YNLI), 163–183 (FVLG…IYGA), 204–224 (VVLS…LGAV), 237–257 (APTA…FAML), 273–293 (QSLI…ITLV), 300–320 (LLAY…IAAN), 328–348 (MFYT…IVAL), 371–391 (LALM…FVGF), 405–425 (GFTW…FYYL), and 451–471 (WAVS…SSLI).

Belongs to the complex I subunit 2 family. As to quaternary structure, NDH-1 is composed of 14 different subunits. Subunits NuoA, H, J, K, L, M, N constitute the membrane sector of the complex.

The protein localises to the cell inner membrane. It carries out the reaction a quinone + NADH + 5 H(+)(in) = a quinol + NAD(+) + 4 H(+)(out). NDH-1 shuttles electrons from NADH, via FMN and iron-sulfur (Fe-S) centers, to quinones in the respiratory chain. The immediate electron acceptor for the enzyme in this species is believed to be ubiquinone. Couples the redox reaction to proton translocation (for every two electrons transferred, four hydrogen ions are translocated across the cytoplasmic membrane), and thus conserves the redox energy in a proton gradient. The sequence is that of NADH-quinone oxidoreductase subunit N from Hydrogenovibrio crunogenus (strain DSM 25203 / XCL-2) (Thiomicrospira crunogena).